Here is a 196-residue protein sequence, read N- to C-terminus: Ribosomal RNA large subunit methyltransferase E (196 aa).

Residues Gly-50, Trp-52, Asp-70, Asp-87, and Asp-112 each coordinate S-adenosyl-L-methionine. Residue Lys-152 is the Proton acceptor of the active site.

This sequence belongs to the class I-like SAM-binding methyltransferase superfamily. RNA methyltransferase RlmE family.

The protein resides in the cytoplasm. It catalyses the reaction uridine(2552) in 23S rRNA + S-adenosyl-L-methionine = 2'-O-methyluridine(2552) in 23S rRNA + S-adenosyl-L-homocysteine + H(+). In terms of biological role, specifically methylates the uridine in position 2552 of 23S rRNA at the 2'-O position of the ribose in the fully assembled 50S ribosomal subunit. In Bdellovibrio bacteriovorus (strain ATCC 15356 / DSM 50701 / NCIMB 9529 / HD100), this protein is Ribosomal RNA large subunit methyltransferase E.